Consider the following 97-residue polypeptide: Osteocalcin (97 aa).

The N-terminal stretch at 1-18 (MKTLAILVLCSLAAICLT) is a signal peptide. The propeptide occupies 19–52 (SSASAGAQPAGDSPVQGGLFMEKDQASAVVRQTR). Positions 53–93 (AAKELTLAQTESLREVCETNMACDEMADAQGIVAAYQAFYG) constitute a Gla domain. Ca(2+) contacts are provided by Glu63, Glu67, Glu70, and Asp76. Glu63, Glu67, and Glu70 each carry 4-carboxyglutamate. A disulfide bridge connects residues Cys69 and Cys75. Glu77 carries the 4-carboxyglutamate modification.

This sequence belongs to the osteocalcin/matrix Gla protein family. Post-translationally, gamma-carboxyglutamate residues are formed by vitamin K dependent carboxylation by GGCX. These residues are essential for the binding of calcium. In the branchial arches, BGP is found outside the chondrocyte-containing zone. It is found in some cells in the basal zone of the branchial filaments, near the branchial arches, and within the extracellular matrix in the medial zone. In the vertebra, BGP is found in the mineralized bone matrix.

It is found in the secreted. The carboxylated form is one of the main organic components of the bone matrix, which constitutes 1-2% of the total bone protein. The carboxylated form binds strongly to apatite and calcium. In Argyrosomus regius (Meagre), this protein is Osteocalcin (bglap).